The primary structure comprises 125 residues: Basic leucine zipper transcriptional factor ATF-like (125 aa).

The span at 1 to 14 (MPHSSDSSDSSFSR) shows a compositional bias: low complexity. Positions 1 to 59 (MPHSSDSSDSSFSRSPPPGKQDSSDDVRKVQRREKNRIAAQKSRQRQTQKADTLHLESE) are disordered. The region spanning 26 to 89 (DVRKVQRREK…KYFTSVLSSH (64 aa)) is the bZIP domain. A basic motif region spans residues 28 to 50 (RKVQRREKNRIAAQKSRQRQTQK). Serine 43 bears the Phosphoserine mark. Phosphothreonine is present on threonine 48. The leucine-zipper stretch occupies residues 54–75 (LHLESEDLEKQNAALRKEIKQL).

This sequence belongs to the bZIP family. Heterodimer; mainly heterodimerizes with JUNB. The BATF-JUNB heterodimer interacts with IRF4 and IRF8. Interacts (via bZIP domain) with IRF4 and IRF8; the interaction is direct. Also forms heterodimers with JUN and JUND. Interacts with IFI35. In terms of processing, phosphorylated on serine and threonine residues and at least one tyrosine residue. Phosphorylation at Ser-43 inhibit DNA binding activity and transforms it as a negative regulator of AP-1 mediated transcription. Detected in postnatal and adult lymphoid tissues such as thymus, spleen and lymph nodes. In thymus most concentrated expression is found in the immediate cortical layer. Differentially expressed during T-cell development in thymus. Highly expressed in Th17, Th1 and Th2 cells and in activated B-cells.

It localises to the nucleus. The protein localises to the cytoplasm. Functionally, AP-1 family transcription factor that controls the differentiation of lineage-specific cells in the immune system: specifically mediates the differentiation of T-helper 17 cells (Th17), follicular T-helper cells (TfH), CD8(+) dendritic cells and class-switch recombination (CSR) in B-cells. Acts via the formation of a heterodimer with JUNB that recognizes and binds DNA sequence 5'-TGA[CG]TCA-3'. The BATF-JUNB heterodimer also forms a complex with IRF4 (or IRF8) in immune cells, leading to recognition of AICE sequence (5'-TGAnTCA/GAAA-3'), an immune-specific regulatory element, followed by cooperative binding of BATF and IRF4 (or IRF8) and activation of genes. Controls differentiation of T-helper cells producing interleukin-17 (Th17 cells) by binding to Th17-associated gene promoters: regulates expression of the transcription factor RORC itself and RORC target genes such as IL17 (IL17A or IL17B). Also involved in differentiation of follicular T-helper cells (TfH) by directing expression of BCL6 and MAF. In B-cells, involved in class-switch recombination (CSR) by controlling the expression of both AICDA and of germline transcripts of the intervening heavy-chain region and constant heavy-chain region (I(H)-C(H)). Following infection, can participate in CD8(+) dendritic cell differentiation via interaction with IRF4 and IRF8 to mediate cooperative gene activation. Regulates effector CD8(+) T-cell differentiation by regulating expression of SIRT1. Following DNA damage, part of a differentiation checkpoint that limits self-renewal of hematopoietic stem cells (HSCs): up-regulated by STAT3, leading to differentiation of HSCs, thereby restricting self-renewal of HSCs. In Mus musculus (Mouse), this protein is Basic leucine zipper transcriptional factor ATF-like (Batf).